Here is a 636-residue protein sequence, read N- to C-terminus: MSSISIALPDGSKREIASGSTIADLAASIGAGLAKAAIAGKLDGELVDLSTELKDDSRVEIITEKSPEALTVIRHSAAHLMAQAVKELFPQAKVTIGPAIESGFYYDFDMDAPFTPEDLERIEARMAELAAANQKIERRVLSSSEAVSLFSGMGENYKVELINDLAAETVSVYSQGDFADLCRGPHLPSTSRIKAFKLLSIAGAYWRGDEKNRMLQRIYGTAFADKKELEAYLHRLEESKRRDHRRLGRELDLFSFSDEVGAGLVIWHPKGAMLRTILEDFERREHLKRGYDIVLGPQILKKELWQRSGHYENYRENMYFTEVDEQSYGIKPMNCLAHMMIYKSHLRSYRDLPLRYFELGTVHRHERAGVLHGLLRVRGFTQDDAHILCAPEQLDGEIKGVLKFVSDVMAIFGFEYEMELSTRPEKSIGDDAAWELATEALLSALKDTGRSFEINEGDGAFYGPKIDIKLKDALDRRWQCATIQCDFTLPERFDLQYVAADGEKKRPVMVHRVVLGAIERFIGVLIEHYAGNFPLWLSPVQAMLVTVTDNHIPYAQGVLEHLREAGIRVQGDFRNEKLSFKIREAQLQKVPYMLVIGDKEMESATVTPRFRDGKNLVAMKPEDFVAFVVEETKNFR.

In terms of domain architecture, TGS spans 1–63 (MSSISIALPD…KDDSRVEIIT (63 aa)). Residues 243-534 (DHRRLGRELD…LIEHYAGNFP (292 aa)) form a catalytic region. 3 residues coordinate Zn(2+): Cys-335, His-386, and His-511.

It belongs to the class-II aminoacyl-tRNA synthetase family. Homodimer. Zn(2+) is required as a cofactor.

It localises to the cytoplasm. It catalyses the reaction tRNA(Thr) + L-threonine + ATP = L-threonyl-tRNA(Thr) + AMP + diphosphate + H(+). In terms of biological role, catalyzes the attachment of threonine to tRNA(Thr) in a two-step reaction: L-threonine is first activated by ATP to form Thr-AMP and then transferred to the acceptor end of tRNA(Thr). Also edits incorrectly charged L-seryl-tRNA(Thr). The polypeptide is Threonine--tRNA ligase (Pelobacter propionicus (strain DSM 2379 / NBRC 103807 / OttBd1)).